Consider the following 367-residue polypeptide: Germination protease (367 aa).

Residues 1 to 15 (MKEPLDLSKYSVRTD) constitute a propeptide that is removed on maturation.

This sequence belongs to the peptidase A25 family. In terms of assembly, homotetramer. Autoproteolytically processed. The inactive tetrameric zymogen termed p46 autoprocesses to a smaller form termed p41, which is active only during spore germination.

The enzyme catalyses Endopeptidase action with P4 Glu or Asp, P1 preferably Glu &gt; Asp, P1' hydrophobic and P2' Ala.. Functionally, initiates the rapid degradation of small, acid-soluble proteins during spore germination. This is Germination protease from Bacillus cereus (strain ATCC 10987 / NRS 248).